The following is a 68-amino-acid chain: Metallothionein-3 (68 aa).

Methionine 1 is modified (N-acetylmethionine). Positions 1-30 (MDPETCPCPSGGSCTCADSCKCEGCKCTSC) are beta. Residues cysteine 6, cysteine 8, cysteine 14, cysteine 16, cysteine 20, cysteine 22, cysteine 25, cysteine 27, and cysteine 30 each contribute to the a divalent metal cation site. The segment at 31–68 (KKSCCSCCPAECEKCAKDCVCKGGEAAEAEAEKCSCCQ) is alpha. The residue at position 33 (serine 33) is a Phosphoserine. Residues cysteine 34, cysteine 35, cysteine 37, cysteine 38, cysteine 42, cysteine 45, cysteine 49, cysteine 51, cysteine 64, cysteine 66, and cysteine 67 each contribute to the a divalent metal cation site.

It belongs to the metallothionein superfamily. Type 1 family. In terms of tissue distribution, abundant in a subset of astrocytes in the normal human brain, but greatly reduced in the Alzheimer disease (AD) brain.

Its function is as follows. Binds heavy metals. Contains three zinc and three copper atoms per polypeptide chain and only a negligible amount of cadmium. Inhibits survival and neurite formation of cortical neurons in vitro. The protein is Metallothionein-3 (MT3) of Homo sapiens (Human).